The sequence spans 242 residues: Putative pyrimidine-specific ribonucleoside hydrolase RihB (242 aa).

Glutamine 156 and histidine 168 together coordinate substrate.

The protein belongs to the IUNH family. RihB subfamily.

The enzyme catalyses a pyrimidine ribonucleoside + H2O = a pyrimidine nucleobase + D-ribose. This Shigella boydii serotype 4 (strain Sb227) protein is Putative pyrimidine-specific ribonucleoside hydrolase RihB (rihB).